An 89-amino-acid chain; its full sequence is Small ribosomal subunit protein uS15 (89 aa).

This sequence belongs to the universal ribosomal protein uS15 family. As to quaternary structure, part of the 30S ribosomal subunit. Forms a bridge to the 50S subunit in the 70S ribosome, contacting the 23S rRNA.

Functionally, one of the primary rRNA binding proteins, it binds directly to 16S rRNA where it helps nucleate assembly of the platform of the 30S subunit by binding and bridging several RNA helices of the 16S rRNA. In terms of biological role, forms an intersubunit bridge (bridge B4) with the 23S rRNA of the 50S subunit in the ribosome. The polypeptide is Small ribosomal subunit protein uS15 (Rhizobium rhizogenes (strain K84 / ATCC BAA-868) (Agrobacterium radiobacter)).